A 302-amino-acid polypeptide reads, in one-letter code: AP-1 complex-associated regulatory protein (302 aa).

Phosphoserine is present on serine 29. The tract at residues 78–138 (DSIAEKQKDL…ERQRIVQQYH (61 aa)) is interaction with AP1G1. Residues 80 to 138 (IAEKQKDLDKKIQKELALQEEKLRLEEEALYAAQREAARAAKQRKLLEQERQRIVQQYH) adopt a coiled-coil conformation. The segment covering 188–206 (CDLMTKTKSTSGNDDSTSL) has biased composition (polar residues). The segment at 188–258 (CDLMTKTKST…TSASDDSNGL (71 aa)) is disordered. The sufficient for association with the Arp2/3 complex stretch occupies residues 199–215 (GNDDSTSLDLEWEDEEG). A compositionally biased stretch (basic and acidic residues) spans 221-233 (PMRERSKTEEDIL). At serine 226 the chain carries Phosphoserine. The residue at position 228 (threonine 228) is a Phosphothreonine. Over residues 242–255 (KKTGSNPTSASDDS) the composition is skewed to polar residues.

Interacts (via coiled-coil domain) with AP1G1 (via GAE domain). Interacts with KIF5B. Associates with the Arp2/3 complex. In terms of processing, palmitoylated.

The protein resides in the golgi apparatus. It is found in the trans-Golgi network. The protein localises to the late endosome. Its subcellular location is the early endosome. Its function is as follows. Necessary for adaptor protein complex 1 (AP-1)-dependent transport between the trans-Golgi network and endosomes. Regulates the membrane association of AP1G1/gamma1-adaptin, one of the subunits of the AP-1 adaptor complex. The direct interaction with AP1G1/gamma1-adaptin attenuates the release of the AP-1 complex from membranes. Regulates endosomal membrane traffic via association with AP-1 and KIF5B thus linking kinesin-based plus-end-directed microtubular transport to AP-1-dependent membrane traffic. May act as effector of AP-1 in calcium-induced endo-lysosome secretion. Inhibits Arp2/3 complex function; negatively regulates cell spreading, size and motility via intracellular sequestration of the Arp2/3 complex. This Homo sapiens (Human) protein is AP-1 complex-associated regulatory protein (AP1AR).